Reading from the N-terminus, the 637-residue chain is DNA mismatch repair protein MutL (637 aa).

Belongs to the DNA mismatch repair MutL/HexB family.

This protein is involved in the repair of mismatches in DNA. It is required for dam-dependent methyl-directed DNA mismatch repair. May act as a 'molecular matchmaker', a protein that promotes the formation of a stable complex between two or more DNA-binding proteins in an ATP-dependent manner without itself being part of a final effector complex. The polypeptide is DNA mismatch repair protein MutL (Actinobacillus succinogenes (strain ATCC 55618 / DSM 22257 / CCUG 43843 / 130Z)).